The following is a 1939-amino-acid chain: Myosin-4 (1939 aa).

The Myosin N-terminal SH3-like domain occupies 33–82 (DAKSSVFVVDAKESYVKATVQSREGGKVTAKTEGGATVTVKEDQVFSMNP). Serine 36 carries the post-translational modification Phosphoserine. Residues threonine 64 and threonine 69 each carry the phosphothreonine modification. Serine 79 carries the post-translational modification Phosphoserine. A Myosin motor domain is found at 86 to 782 (DKIEDMAMMT…LLGTLEEMRD (697 aa)). The residue at position 130 (lysine 130) is an N6,N6,N6-trimethyllysine. 179-186 (GESGAGKT) is an ATP binding site. Tyrosine 389 carries the post-translational modification Phosphotyrosine. The residue at position 391 (threonine 391) is a Phosphothreonine. Residue serine 392 is modified to Phosphoserine. Residue threonine 419 is modified to Phosphothreonine. Position 424 is a phosphotyrosine (tyrosine 424). At serine 625 the chain carries Phosphoserine. Residues 659–681 (LNKLMTNLKSTHPHFVRCLIPNE) form an actin-binding region. Histidine 757 carries the post-translational modification Pros-methylhistidine. The tract at residues 761–775 (KFGHTKVFFKAGLLG) is actin-binding. At threonine 776 the chain carries Phosphothreonine. Residues 785–814 (LAQLITRTQAVCRGYLMRVEFRKMMERRES) enclose the IQ domain. Positions 843-1939 (LLKSAETEKE…EVHTKVISEE (1097 aa)) form a coiled coil. Serine 1092 and serine 1096 each carry phosphoserine. Disordered regions lie at residues 1128–1147 (AERASRAKAEKQRSDLSREL) and 1153–1172 (RLEEAGGATSAQIEMNKKRE). Phosphoserine is present on residues serine 1162 and serine 1237. Threonine 1241 bears the Phosphothreonine mark. The residue at position 1243 (serine 1243) is a Phosphoserine. A Phosphothreonine modification is found at threonine 1255. A Phosphoserine modification is found at serine 1261. Threonine 1265 bears the Phosphothreonine mark. Serine 1278 bears the Phosphoserine mark. Threonine 1286 is subject to Phosphothreonine. Phosphoserine is present on residues serine 1288, serine 1292, serine 1303, serine 1306, and serine 1413. A Phosphotyrosine modification is found at tyrosine 1464. Position 1467 is a phosphothreonine (threonine 1467). Serine 1474 is modified (phosphoserine). Phosphotyrosine is present on tyrosine 1492. Position 1495 is a phosphoserine (serine 1495). At threonine 1501 the chain carries Phosphothreonine. Serine 1514 is subject to Phosphoserine. Threonine 1517 bears the Phosphothreonine mark. Residues serine 1542, serine 1547, serine 1554, serine 1574, serine 1600, serine 1603, serine 1714, and serine 1726 each carry the phosphoserine modification. Threonine 1730 and threonine 1736 each carry phosphothreonine. At serine 1739 the chain carries Phosphoserine.

This sequence belongs to the TRAFAC class myosin-kinesin ATPase superfamily. Myosin family. As to quaternary structure, muscle myosin is a hexameric protein that consists of 2 heavy chain subunits (MHC), 2 alkali light chain subunits (MLC) and 2 regulatory light chain subunits (MLC-2).

The protein localises to the cytoplasm. It is found in the myofibril. Muscle contraction. The protein is Myosin-4 of Rattus norvegicus (Rat).